An 81-amino-acid polypeptide reads, in one-letter code: Cytochrome c oxidase subunit NDUFA4 (81 aa).

Residues 1–14 (MLRQIIGQAKKHPS) lie on the Mitochondrial matrix side of the membrane. N6-acetyllysine is present on K10. The chain crosses the membrane as a helical span at residues 15–37 (LIPLFVFIGTGATGATLYLLRLA). The Mitochondrial intermembrane segment spans residues 38–81 (LFNPDVCWDRNNPEPWNKLGPNDQYKFYSVNVDYSKLKKERPDF). Position 66 is a phosphoserine (S66).

The protein belongs to the complex IV NDUFA4 subunit family. Component of the cytochrome c oxidase (complex IV, CIV), a multisubunit enzyme composed of 14 subunits. The complex is composed of a catalytic core of 3 subunits MT-CO1, MT-CO2 and MT-CO3, encoded in the mitochondrial DNA, and 11 supernumerary subunits COX4I1 (or COX4I2), COX5A, COX5B, COX6A1 (or COX6A2), COX6B1 (or COX6B2), COX6C, COX7A2 (or COX7A1), COX7B, COX7C, COX8A and NDUFA4, which are encoded in the nuclear genome. The complex exists as a monomer or a dimer and forms supercomplexes (SCs) in the inner mitochondrial membrane with NADH-ubiquinone oxidoreductase (complex I, CI) and ubiquinol-cytochrome c oxidoreductase (cytochrome b-c1 complex, complex III, CIII), resulting in different assemblies (supercomplex SCI(1)III(2)IV(1) and megacomplex MCI(2)III(2)IV(2)). Interacts with RAB5IF. Interacts with FLVCR2; this interaction occurs in the absence of heme and is disrupted upon heme binding.

Its subcellular location is the mitochondrion inner membrane. In terms of biological role, component of the cytochrome c oxidase, the last enzyme in the mitochondrial electron transport chain which drives oxidative phosphorylation. The respiratory chain contains 3 multisubunit complexes succinate dehydrogenase (complex II, CII), ubiquinol-cytochrome c oxidoreductase (cytochrome b-c1 complex, complex III, CIII) and cytochrome c oxidase (complex IV, CIV), that cooperate to transfer electrons derived from NADH and succinate to molecular oxygen, creating an electrochemical gradient over the inner membrane that drives transmembrane transport and the ATP synthase. Cytochrome c oxidase is the component of the respiratory chain that catalyzes the reduction of oxygen to water. Electrons originating from reduced cytochrome c in the intermembrane space (IMS) are transferred via the dinuclear copper A center (CU(A)) of subunit 2 and heme A of subunit 1 to the active site in subunit 1, a binuclear center (BNC) formed by heme A3 and copper B (CU(B)). The BNC reduces molecular oxygen to 2 water molecules unsing 4 electrons from cytochrome c in the IMS and 4 protons from the mitochondrial matrix. NDUFA4 is required for complex IV maintenance. This chain is Cytochrome c oxidase subunit NDUFA4 (NDUFA4), found in Homo sapiens (Human).